Consider the following 362-residue polypeptide: tRNA-specific 2-thiouridylase MnmA (362 aa).

ATP-binding positions include 9 to 16 and methionine 35; that span reads GMSGGVDS. Residues 95 to 97 are interaction with target base in tRNA; it reads NPD. The active-site Nucleophile is the cysteine 100. Cysteine 100 and cysteine 196 are joined by a disulfide. Glycine 124 is a binding site for ATP. Residues 146–148 are interaction with tRNA; sequence KDQ. Cysteine 196 acts as the Cysteine persulfide intermediate in catalysis. The tract at residues 308–309 is interaction with tRNA; that stretch reads RY.

This sequence belongs to the MnmA/TRMU family.

It localises to the cytoplasm. It carries out the reaction S-sulfanyl-L-cysteinyl-[protein] + uridine(34) in tRNA + AH2 + ATP = 2-thiouridine(34) in tRNA + L-cysteinyl-[protein] + A + AMP + diphosphate + H(+). Functionally, catalyzes the 2-thiolation of uridine at the wobble position (U34) of tRNA, leading to the formation of s(2)U34. The polypeptide is tRNA-specific 2-thiouridylase MnmA (Nitrosomonas europaea (strain ATCC 19718 / CIP 103999 / KCTC 2705 / NBRC 14298)).